Here is a 637-residue protein sequence, read N- to C-terminus: 1-deoxy-D-xylulose-5-phosphate synthase (637 aa).

Thiamine diphosphate contacts are provided by residues His71 and 112–114; that span reads SHA. Asp144 contacts Mg(2+). Thiamine diphosphate-binding positions include 145–146, Asn173, Tyr284, and Glu365; that span reads GA. Asn173 is a Mg(2+) binding site.

It belongs to the transketolase family. DXPS subfamily. In terms of assembly, homodimer. The cofactor is Mg(2+). Requires thiamine diphosphate as cofactor.

It catalyses the reaction D-glyceraldehyde 3-phosphate + pyruvate + H(+) = 1-deoxy-D-xylulose 5-phosphate + CO2. The protein operates within metabolic intermediate biosynthesis; 1-deoxy-D-xylulose 5-phosphate biosynthesis; 1-deoxy-D-xylulose 5-phosphate from D-glyceraldehyde 3-phosphate and pyruvate: step 1/1. In terms of biological role, catalyzes the acyloin condensation reaction between C atoms 2 and 3 of pyruvate and glyceraldehyde 3-phosphate to yield 1-deoxy-D-xylulose-5-phosphate (DXP). The polypeptide is 1-deoxy-D-xylulose-5-phosphate synthase (Mycolicibacterium vanbaalenii (strain DSM 7251 / JCM 13017 / BCRC 16820 / KCTC 9966 / NRRL B-24157 / PYR-1) (Mycobacterium vanbaalenii)).